Consider the following 259-residue polypeptide: Aminoglycoside 3'-phosphotransferase (259 aa).

The active-site Proton acceptor is the aspartate 187.

This sequence belongs to the aminoglycoside phosphotransferase family.

The catalysed reaction is kanamycin A + ATP = kanamycin 3'-phosphate + ADP + H(+). Resistance to kanamycin and structurally-related aminoglycosides, including amikacin. This chain is Aminoglycoside 3'-phosphotransferase (aphA-6), found in Acinetobacter baumannii.